The following is a 44-amino-acid chain: Photosystem I reaction center subunit IX (44 aa).

A helical transmembrane segment spans residues 7–27 (YLSTAPVLATLWFGSLAGLLI).

This sequence belongs to the PsaJ family.

It is found in the plastid. The protein resides in the chloroplast thylakoid membrane. Functionally, may help in the organization of the PsaE and PsaF subunits. The sequence is that of Photosystem I reaction center subunit IX from Calycanthus floridus var. glaucus (Eastern sweetshrub).